The following is an 80-amino-acid chain: Defensin coprisin (80 aa).

The first 20 residues, 1-20 (MAKLIAFALVASLCLSMVLC), serve as a signal peptide directing secretion. Positions 21 to 37 (NPLPEEVQEEGLVRQKR) are excised as a propeptide. Cystine bridges form between Cys-40-Cys-71, Cys-57-Cys-76, and Cys-61-Cys-78.

It belongs to the invertebrate defensin family. Type 1 subfamily.

The protein resides in the secreted. Its subcellular location is the target cell membrane. Its function is as follows. Potent broad-spectrum antibacterial peptide against both Gram-positive (B.subtilis, S.epidermidis, and S.aureus) and Gram-negative bacteria (E.coli, S.typhimurium, and P.aeruginosa). Is also active against all antibiotic-resistant bacterial strains tested. Induces apoptosis in C.albicans, but does not disrupt the fungal plasma membrane at all. Acts by permeabilizing the bacterial cell membrane, but not human membranes. Also shows potent anti-inflammatory activities, since it reduces both LPS-induced nitric oxide release and pro-inflammatory cytokine production. Anti-inflammatory activities are initiated by suppressing the binding of LPS to toll-like receptor 4 (TLR4), and subsequently inhibiting the phosphorylation of p38 mitogen-activated protein kinase (MAPK) and nuclear translocation of NF-kB (TNFRSF11A). Does not show hemolytic activity against human erythrocytes. This Copris tripartitus (Dung beetle) protein is Defensin coprisin.